We begin with the raw amino-acid sequence, 716 residues long: Hepatocyte growth factor-like protein (716 aa).

A signal peptide spans 1–18; the sequence is MGWLPLLLLLVQCSRALG. In terms of domain architecture, PAN spans 19-105; that stretch reads QRSPLNDFQL…SLCHLFQKKD (87 aa). Intrachain disulfides connect C56–C78, C60–C66, C110–C186, C131–C169, C157–C181, C191–C268, C194–C333, C212–C251, C240–C263, C292–C370, C313–C352, C341–C364, C379–C457, C400–C440, C428–C452, C477–C593, C512–C528, C607–C672, C637–C651, and C662–C690. N72 carries an N-linked (GlcNAc...) asparagine glycan. 4 Kringle domains span residues 110–186, 191–268, 292–370, and 379–457; these read CIMD…IKTC, CVLC…LPSC, CFRG…IPRC, and CYHG…LQRC. The N-linked (GlcNAc...) asparagine glycan is linked to N173. N-linked (GlcNAc...) asparagine glycosylation is present at N305. The region spanning 489–714 is the Peptidase S1 domain; that stretch reads VVGGHPGNSP…FVDWINKVMQ (226 aa). N620 carries N-linked (GlcNAc...) asparagine glycosylation.

The protein belongs to the peptidase S1 family. Plasminogen subfamily. In terms of assembly, dimer of an alpha chain and a beta chain linked by a disulfide bond. Interacts (via beta chain) with MST1R (via SEMA domain). Cleaved after Arg-488, probably by HPN/Hepsin, to yield the active form consisting of two disulfide-linked chains. As to expression, liver. Lower levels in lung, placenta and adrenal.

Its subcellular location is the secreted. This Mus musculus (Mouse) protein is Hepatocyte growth factor-like protein (Mst1).